The sequence spans 441 residues: Ribosomal protein uS12 methylthiotransferase RimO (441 aa).

In terms of domain architecture, MTTase N-terminal spans P8–P118. 6 residues coordinate [4Fe-4S] cluster: C17, C53, C82, C150, C154, and C157. A Radical SAM core domain is found at L136 to E373. The region spanning Q376–V441 is the TRAM domain.

This sequence belongs to the methylthiotransferase family. RimO subfamily. [4Fe-4S] cluster serves as cofactor.

The protein resides in the cytoplasm. The enzyme catalyses L-aspartate(89)-[ribosomal protein uS12]-hydrogen + (sulfur carrier)-SH + AH2 + 2 S-adenosyl-L-methionine = 3-methylsulfanyl-L-aspartate(89)-[ribosomal protein uS12]-hydrogen + (sulfur carrier)-H + 5'-deoxyadenosine + L-methionine + A + S-adenosyl-L-homocysteine + 2 H(+). Functionally, catalyzes the methylthiolation of an aspartic acid residue of ribosomal protein uS12. In Salmonella agona (strain SL483), this protein is Ribosomal protein uS12 methylthiotransferase RimO.